The following is a 127-amino-acid chain: Protein ApaG (127 aa).

The 125-residue stretch at 3 to 127 folds into the ApaG domain; sequence EGKKYQINIS…FTLAMPRVLH (125 aa).

The chain is Protein ApaG from Thiobacillus denitrificans (strain ATCC 25259 / T1).